Reading from the N-terminus, the 388-residue chain is MNEIKKKQIAILGSTGSIGTQALQVIEEHPELYEVYALTANNKVDLLIAQARKFMPEAVVIANEEKYAQLKEALSDLPVKVYAGAAALCQIVESGPIDVVLTAMVGYAGLKPTMNAIRAGKAIALANKETLVVAGELINQLARQYRTPILPVDSEHSAVFQCLAGEVGNPIEKVILTASGGPFRTCTMEQLKTVTKVQALKHPNWEMGAKITIDSASMMNKGFEVIEAKWLFGVQPSQIEVVVHPQSVIHSMVQFEDGAIKAQLGMPDMRLPIQYAFSYPDRINSSFDRLDFSKCTNLTFEQPDTKRFRNLALAYESMYRGGNMPCIVNAANEVVVAAFLRDEISFLGMSDVIEHTMGQVSFVQTPTYDDYVATDAEARRIARELICK.

Residues T15, G16, S17, I18, and N127 each contribute to the NADPH site. K128 contributes to the 1-deoxy-D-xylulose 5-phosphate binding site. Residue E129 coordinates NADPH. Residue D153 participates in Mn(2+) binding. 4 residues coordinate 1-deoxy-D-xylulose 5-phosphate: S154, E155, S179, and H202. E155 serves as a coordination point for Mn(2+). G208 provides a ligand contact to NADPH. 4 residues coordinate 1-deoxy-D-xylulose 5-phosphate: S215, N220, K221, and E224. E224 lines the Mn(2+) pocket.

This sequence belongs to the DXR family. It depends on Mg(2+) as a cofactor. Mn(2+) is required as a cofactor.

The catalysed reaction is 2-C-methyl-D-erythritol 4-phosphate + NADP(+) = 1-deoxy-D-xylulose 5-phosphate + NADPH + H(+). Its pathway is isoprenoid biosynthesis; isopentenyl diphosphate biosynthesis via DXP pathway; isopentenyl diphosphate from 1-deoxy-D-xylulose 5-phosphate: step 1/6. Catalyzes the NADPH-dependent rearrangement and reduction of 1-deoxy-D-xylulose-5-phosphate (DXP) to 2-C-methyl-D-erythritol 4-phosphate (MEP). The chain is 1-deoxy-D-xylulose 5-phosphate reductoisomerase from Bacteroides fragilis (strain ATCC 25285 / DSM 2151 / CCUG 4856 / JCM 11019 / LMG 10263 / NCTC 9343 / Onslow / VPI 2553 / EN-2).